A 363-amino-acid chain; its full sequence is MKQVMFYCRSGFEKECAGEIQDKATQLEVFGFPRLKSNTGYVLFECYQEGDADKLIQQIKFNELIFARQMFAVATELSDLPTEDRISPILNALSSVEGVPHCGDIRIETPDTNEAKELLKFCRKFTVPLRQALRGKQMLTARDTDRIPVMHVCFIEPGHCYVGYSYTNNNSKFFMGIPRLKFPSDSPSRSTLKLEEAFHVFIPRDEWDTRLASGMWAVDLGACPGGWTYQLVKRSMFVHAIDNGMMAQSLMDTGQVKHHMVDGFKFEPQRKNVTWIVCDMIEKPARVAHLMGEWLIKGWAKEALFNLKLPMKGRYDEVLQDIENLKEFLNKNGFKYKLQAKHLYHDREEITVHIQAITNISPH.

S-adenosyl-L-methionine contacts are provided by residues Ser-190, 223–226, Asp-242, Asp-262, and Asp-279; that span reads CPGG. Catalysis depends on Lys-308, which acts as the Proton acceptor.

It belongs to the class I-like SAM-binding methyltransferase superfamily. RNA methyltransferase RlmE family. RlmM subfamily. As to quaternary structure, monomer.

Its subcellular location is the cytoplasm. The catalysed reaction is cytidine(2498) in 23S rRNA + S-adenosyl-L-methionine = 2'-O-methylcytidine(2498) in 23S rRNA + S-adenosyl-L-homocysteine + H(+). Functionally, catalyzes the 2'-O-methylation at nucleotide C2498 in 23S rRNA. The sequence is that of Ribosomal RNA large subunit methyltransferase M from Aliivibrio salmonicida (strain LFI1238) (Vibrio salmonicida (strain LFI1238)).